A 356-amino-acid chain; its full sequence is MRVADFSFELPEALIAHYPQPQRSGCRLLSLDGPTGTLTHGIFTDLLDKLAPGDLLVFNNTRVIPARLFGRKASGGKLEVLVERVLDDHRVLAHVKASKAPKPGAELLLGDDESIRATMLARHDTLFELRFDDERDVFTILNAVGHMPLPPYIDRPDEDADRELYQTVYSQRPGAVAAPTAGLHFDEPMLAALQEKGIEMAFVTLHVGAGTFQPVRVDTIEDHIMHSEYAEVPQEVVDAVLACKARGKRVVAVGTTSVRSLESAAKAAENGLIAPFFGDTRIFIYPGYHYQVVDALVTNFHLPESTLIMLVSAFAGYKNTMNAYQQAVAEQYRFFSYGDAMFISRNPRAPQEKVSP.

Belongs to the QueA family. In terms of assembly, monomer.

The protein resides in the cytoplasm. The catalysed reaction is 7-aminomethyl-7-carbaguanosine(34) in tRNA + S-adenosyl-L-methionine = epoxyqueuosine(34) in tRNA + adenine + L-methionine + 2 H(+). The protein operates within tRNA modification; tRNA-queuosine biosynthesis. Transfers and isomerizes the ribose moiety from AdoMet to the 7-aminomethyl group of 7-deazaguanine (preQ1-tRNA) to give epoxyqueuosine (oQ-tRNA). The protein is S-adenosylmethionine:tRNA ribosyltransferase-isomerase of Yersinia pestis.